Reading from the N-terminus, the 544-residue chain is Ribosomal protein S6 kinase-like 1 (544 aa).

The 29-residue stretch at 87-115 folds into the MIT domain; it reads VHVDPNKERREAVKLKITKYLRRAEEIFN. A Protein kinase domain is found at 145–534; it reads SALEQLKGCR…TSRLKSHPFF (390 aa). ATP contacts are provided by residues 151–159 and lysine 177; that span reads KGCRVVGII. Disordered regions lie at residues 262–344 and 353–372; these read PAEL…HWVR and AYGR…SLGS. A compositionally biased stretch (polar residues) spans 303-313; it reads SRPSAVFSSDP. Aspartate 407 serves as the catalytic Proton acceptor.

The protein belongs to the protein kinase superfamily. Ser/Thr protein kinase family. S6 kinase subfamily.

It carries out the reaction L-seryl-[protein] + ATP = O-phospho-L-seryl-[protein] + ADP + H(+). It catalyses the reaction L-threonyl-[protein] + ATP = O-phospho-L-threonyl-[protein] + ADP + H(+). The polypeptide is Ribosomal protein S6 kinase-like 1 (Rps6kl1) (Mus musculus (Mouse)).